The chain runs to 1505 residues: Probable serine/threonine-protein kinase DDB_G0280133 (1505 aa).

PAS domains are found at residues 2–72, 108–178, and 215–284; these read NTHN…FETG, RMFI…YHGG, and DMFK…TDSH. 2 disordered regions span residues 282–348 and 398–533; these read DSHD…FNHS and RVYG…ESSY. Composition is skewed to low complexity over residues 289-314 and 328-344; these read QQQQ…TTST and SSPP…TPTT. Basic and acidic residues-rich tracts occupy residues 398–407 and 415–430; these read RVYGKDKDKN and ENKD…ESKE. Basic residues predominate over residues 431-443; the sequence is HRHSKEKKKRKKD. Residues 448-468 show a composition bias toward low complexity; sequence NNNNNNNNNNNNNNEQTSDSS. The segment covering 479-489 has biased composition (basic residues); that stretch reads SKKKRSSKKKS. Residues 515–532 show a composition bias toward low complexity; sequence SSNSSSNSSHSNAPHESS. The region spanning 542 to 805 is the Protein kinase domain; it reads YTLGKTLGRG…IMNVLNHPWL (264 aa). ATP contacts are provided by residues 548–556 and Lys571; that span reads LGRGNYGVV. The active-site Proton acceptor is the Asp684. Low complexity predominate over residues 855–960; it reads NILNNNNNNN…NNTNSIINNN (106 aa). Disordered stretches follow at residues 855-1048, 1072-1091, and 1181-1358; these read NILN…SHQQ, QPNQ…QLQQ, and QQQQ…DEEN. Positions 903 to 939 form a coiled coil; sequence NNNNNINNNINNNNNVNNNVNNNKNNNNNNNNNSNNN. Residues 961–974 show a composition bias toward polar residues; that stretch reads LYNQSLSPQNNNIY. Composition is skewed to low complexity over residues 975–1013 and 1022–1048; these read QHSP…QQQH and QQHQ…SHQQ. Residues 1072-1082 show a composition bias toward polar residues; that stretch reads QPNQQVSFDTN. A coiled-coil region spans residues 1125 to 1189; that stretch reads IQQIQQLQQQ…QQQQQQQQND (65 aa). Residues 1202-1271 show a composition bias toward basic and acidic residues; it reads SKRDNSYNKR…NSRDNNRYNN (70 aa). Low complexity predominate over residues 1272 to 1282; the sequence is RDNNNNNNSNN. Basic and acidic residues-rich tracts occupy residues 1283–1301 and 1313–1326; these read NRER…DYGK and NKDK…KPDF. Positions 1331–1347 are enriched in polar residues; sequence SLKNDSSSNYGTISSGR. The FHA domain maps to 1399–1463; the sequence is FLFGRNRDIA…NGTFLKGEKI (65 aa).

The protein belongs to the protein kinase superfamily. CAMK Ser/Thr protein kinase family. SNF1 subfamily.

It catalyses the reaction L-seryl-[protein] + ATP = O-phospho-L-seryl-[protein] + ADP + H(+). The enzyme catalyses L-threonyl-[protein] + ATP = O-phospho-L-threonyl-[protein] + ADP + H(+). This is Probable serine/threonine-protein kinase DDB_G0280133 from Dictyostelium discoideum (Social amoeba).